The following is a 30-amino-acid chain: Chassatide C3 (30 aa).

Residues 1-30 (GIPCGESCVWIPCISSALGCSCKNKVCYRN) constitute a cross-link (cyclopeptide (Gly-Asn)). 3 cysteine pairs are disulfide-bonded: Cys-4–Cys-20, Cys-8–Cys-22, and Cys-13–Cys-27.

Post-translationally, this is a cyclic peptide. As to expression, expressed in fruit, pedicel, stem and root but not in leaf (at protein level).

Probably participates in a plant defense mechanism. This is Chassatide C3 from Chassalia chartacea (Chassalia curviflora).